Consider the following 323-residue polypeptide: Prenyl transferase (323 aa).

Residues lysine 46, arginine 49, and histidine 81 each coordinate isopentenyl diphosphate. Mg(2+) is bound by residues aspartate 88 and aspartate 92. Arginine 97 is an an all-trans-polyprenyl diphosphate binding site. Arginine 98 contributes to the isopentenyl diphosphate binding site. An all-trans-polyprenyl diphosphate is bound by residues lysine 174, threonine 175, and glutamine 212.

The protein belongs to the FPP/GGPP synthase family. Requires Mg(2+) as cofactor.

It localises to the plastid. The protein localises to the cyanelle. Functionally, possible role in synthesis of the nonaprenyl side chain of plastoquinone or in synthesis of other prenyl chains such as undekaprenyl pyrophosphate. The protein is Prenyl transferase (preA) of Cyanophora paradoxa.